The chain runs to 1939 residues: Myosin-1 (1939 aa).

Residues 33-82 (DAKTSVFVAEPKESFVKGTVQSREGGKVTVKTEAGATLTVKEDQVFPMNP) form the Myosin N-terminal SH3-like domain. Phosphothreonine is present on residues threonine 64 and threonine 69. In terms of domain architecture, Myosin motor spans 86–782 (DKIEDMAMMT…LLGLLEEMRD (697 aa)). The residue at position 130 (lysine 130) is an N6,N6,N6-trimethyllysine. An ATP-binding site is contributed by 179-186 (GESGAGKT). At tyrosine 389 the chain carries Phosphotyrosine. Position 419 is a phosphothreonine (threonine 419). Tyrosine 424 is subject to Phosphotyrosine. An actin-binding region spans residues 659–681 (LNKLMTNLRSTHPHFVRCIIPNE). Pros-methylhistidine is present on histidine 757. The segment at 761–775 (KFGHTKVFFKAGLLG) is actin-binding. Positions 785–814 (LAQLITRTQARCRGFLARVEYQKMVERRES) constitute an IQ domain. Residues 843–1939 (LLKSAETEKE…EVHTKIISEE (1097 aa)) are a coiled coil. Serine 1092 and serine 1096 each carry phosphoserine. Disordered stretches follow at residues 1125–1147 (EIEA…SREL) and 1153–1172 (RLEE…KKRE). The span at 1128-1147 (AERASRAKAEKQRSDLSREL) shows a compositional bias: basic and acidic residues. Serine 1162 and serine 1237 each carry phosphoserine. Threonine 1241 is modified (phosphothreonine). At serine 1243 the chain carries Phosphoserine. Threonine 1255 bears the Phosphothreonine mark. Phosphoserine is present on serine 1261. Threonine 1265 and threonine 1286 each carry phosphothreonine. Phosphoserine occurs at positions 1288, 1292, 1303, and 1306. At tyrosine 1464 the chain carries Phosphotyrosine. Threonine 1467 is subject to Phosphothreonine. A Phosphoserine modification is found at serine 1474. The residue at position 1492 (tyrosine 1492) is a Phosphotyrosine. The residue at position 1495 (serine 1495) is a Phosphoserine. Threonine 1501 carries the phosphothreonine modification. A Phosphoserine modification is found at serine 1514. At threonine 1517 the chain carries Phosphothreonine. Phosphoserine occurs at positions 1542, 1554, 1574, 1600, 1603, 1714, and 1726. Phosphothreonine is present on residues threonine 1730 and threonine 1736. Serine 1739 carries the phosphoserine modification.

Belongs to the TRAFAC class myosin-kinesin ATPase superfamily. Myosin family. In terms of assembly, muscle myosin is a hexameric protein that consists of 2 heavy chain subunits (MHC), 2 alkali light chain subunits (MLC) and 2 regulatory light chain subunits (MLC-2). Interacts with SLC26A5.

The protein localises to the cytoplasm. Its subcellular location is the myofibril. In terms of biological role, required for normal hearing. It plays a role in cochlear amplification of auditory stimuli, likely through the positive regulation of prestin (SLC26A5) activity and outer hair cell (OHC) electromotility. The chain is Myosin-1 (MYH1) from Sus scrofa (Pig).